The sequence spans 330 residues: Ribosomal RNA small subunit methyltransferase A (330 aa).

Histidine 29, leucine 31, glycine 56, glutamate 77, and aspartate 98 together coordinate S-adenosyl-L-methionine. Positions 115–158 (PVRSAGLPQAETAPKGLEPAGSSSQQGPRDWLRQTAGAAAPSRG) are disordered. S-adenosyl-L-methionine is bound at residue asparagine 177.

It belongs to the class I-like SAM-binding methyltransferase superfamily. rRNA adenine N(6)-methyltransferase family. RsmA subfamily.

The protein localises to the cytoplasm. It carries out the reaction adenosine(1518)/adenosine(1519) in 16S rRNA + 4 S-adenosyl-L-methionine = N(6)-dimethyladenosine(1518)/N(6)-dimethyladenosine(1519) in 16S rRNA + 4 S-adenosyl-L-homocysteine + 4 H(+). Its function is as follows. Specifically dimethylates two adjacent adenosines (A1518 and A1519) in the loop of a conserved hairpin near the 3'-end of 16S rRNA in the 30S particle. May play a critical role in biogenesis of 30S subunits. The sequence is that of Ribosomal RNA small subunit methyltransferase A from Polaromonas sp. (strain JS666 / ATCC BAA-500).